The sequence spans 513 residues: Histidine ammonia-lyase (513 aa).

The 5-imidazolinone (Ala-Gly) cross-link spans 146-148 (ASG). Serine 147 is modified (2,3-didehydroalanine (Ser)).

Belongs to the PAL/histidase family. Post-translationally, contains an active site 4-methylidene-imidazol-5-one (MIO), which is formed autocatalytically by cyclization and dehydration of residues Ala-Ser-Gly.

It is found in the cytoplasm. It carries out the reaction L-histidine = trans-urocanate + NH4(+). It participates in amino-acid degradation; L-histidine degradation into L-glutamate; N-formimidoyl-L-glutamate from L-histidine: step 1/3. The chain is Histidine ammonia-lyase from Shewanella oneidensis (strain ATCC 700550 / JCM 31522 / CIP 106686 / LMG 19005 / NCIMB 14063 / MR-1).